We begin with the raw amino-acid sequence, 317 residues long: Methionyl-tRNA formyltransferase (317 aa).

Serine 110 to proline 113 serves as a coordination point for (6S)-5,6,7,8-tetrahydrofolate.

Belongs to the Fmt family.

The catalysed reaction is L-methionyl-tRNA(fMet) + (6R)-10-formyltetrahydrofolate = N-formyl-L-methionyl-tRNA(fMet) + (6S)-5,6,7,8-tetrahydrofolate + H(+). Attaches a formyl group to the free amino group of methionyl-tRNA(fMet). The formyl group appears to play a dual role in the initiator identity of N-formylmethionyl-tRNA by promoting its recognition by IF2 and preventing the misappropriation of this tRNA by the elongation apparatus. This is Methionyl-tRNA formyltransferase from Lactiplantibacillus plantarum (strain ATCC BAA-793 / NCIMB 8826 / WCFS1) (Lactobacillus plantarum).